Here is a 373-residue protein sequence, read N- to C-terminus: Dual-specificity RNA methyltransferase RlmN (373 aa).

E94 functions as the Proton acceptor in the catalytic mechanism. The region spanning 100 to 339 (EDDRATLCVS…VIVRKTRGDD (240 aa)) is the Radical SAM core domain. An intrachain disulfide couples C107 to C344. 3 residues coordinate [4Fe-4S] cluster: C114, C118, and C121. S-adenosyl-L-methionine-binding positions include 168–169 (GE), S200, 222–224 (SIH), and N301. C344 functions as the S-methylcysteine intermediate in the catalytic mechanism.

This sequence belongs to the radical SAM superfamily. RlmN family. [4Fe-4S] cluster is required as a cofactor.

Its subcellular location is the cytoplasm. It carries out the reaction adenosine(2503) in 23S rRNA + 2 reduced [2Fe-2S]-[ferredoxin] + 2 S-adenosyl-L-methionine = 2-methyladenosine(2503) in 23S rRNA + 5'-deoxyadenosine + L-methionine + 2 oxidized [2Fe-2S]-[ferredoxin] + S-adenosyl-L-homocysteine. The enzyme catalyses adenosine(37) in tRNA + 2 reduced [2Fe-2S]-[ferredoxin] + 2 S-adenosyl-L-methionine = 2-methyladenosine(37) in tRNA + 5'-deoxyadenosine + L-methionine + 2 oxidized [2Fe-2S]-[ferredoxin] + S-adenosyl-L-homocysteine. In terms of biological role, specifically methylates position 2 of adenine 2503 in 23S rRNA and position 2 of adenine 37 in tRNAs. m2A2503 modification seems to play a crucial role in the proofreading step occurring at the peptidyl transferase center and thus would serve to optimize ribosomal fidelity. This is Dual-specificity RNA methyltransferase RlmN from Shewanella baltica (strain OS223).